Reading from the N-terminus, the 477-residue chain is UDP-N-acetylmuramate--L-alanine ligase (477 aa).

122 to 128 is a binding site for ATP; the sequence is GTHGKTT.

It belongs to the MurCDEF family.

It is found in the cytoplasm. It catalyses the reaction UDP-N-acetyl-alpha-D-muramate + L-alanine + ATP = UDP-N-acetyl-alpha-D-muramoyl-L-alanine + ADP + phosphate + H(+). The protein operates within cell wall biogenesis; peptidoglycan biosynthesis. Its function is as follows. Cell wall formation. This Xylella fastidiosa (strain M23) protein is UDP-N-acetylmuramate--L-alanine ligase.